The following is a 248-amino-acid chain: 2,3-bisphosphoglycerate-dependent phosphoglycerate mutase (248 aa).

Substrate contacts are provided by residues 8–15 (RHGESTWN), 21–22 (TG), Arg60, 87–90 (ERHY), Lys98, 114–115 (RR), and 183–184 (GN). The Tele-phosphohistidine intermediate role is filled by His9. Glu87 functions as the Proton donor/acceptor in the catalytic mechanism.

Belongs to the phosphoglycerate mutase family. BPG-dependent PGAM subfamily.

The catalysed reaction is (2R)-2-phosphoglycerate = (2R)-3-phosphoglycerate. The protein operates within carbohydrate degradation; glycolysis; pyruvate from D-glyceraldehyde 3-phosphate: step 3/5. Functionally, catalyzes the interconversion of 2-phosphoglycerate and 3-phosphoglycerate. This chain is 2,3-bisphosphoglycerate-dependent phosphoglycerate mutase, found in Solibacter usitatus (strain Ellin6076).